The sequence spans 329 residues: Taste receptor type 2 member 134 (329 aa).

The Extracellular segment spans residues 1–27 (MRCSLRGCVQGRGGKSGVSLSKFSPKK). The chain crosses the membrane as a helical span at residues 28 to 48 (MSFFFIFMVIFCIQSLVALLQ). Topologically, residues 49-68 (NGFLATVLGREWVRSQGLPA) are cytoplasmic. Residues 69–89 (GDMIVACLAASRFCLHGVAIV) form a helical membrane-spanning segment. At 90–121 (NNFLTFVKLWSQKIYFSVLWDFVNTVNFWCTT) the chain is on the extracellular side. The chain crosses the membrane as a helical span at residues 122–142 (WLAIFYCVKISSFSHPIFFWI). Over 143 to 153 (KWRISRSVPRL) the chain is Cytoplasmic. Residues 154 to 174 (LLGSLVIGGLSAVSSATGNTI) form a helical membrane-spanning segment. Topologically, residues 175–201 (AFQMTACENYTLAYRTRAFYAYYFRCH) are extracellular. Asn-183 carries an N-linked (GlcNAc...) asparagine glycan. The helical transmembrane segment at 202–222 (AMLMWIIPFFLFLLSVILLMF) threads the bilayer. The Cytoplasmic segment spans residues 223-251 (SLYRHLEHMRYRRPWSHDYSTQAHTMALK). The chain crosses the membrane as a helical span at residues 252 to 272 (SLAFFLVFYTSYVLFLVISVT). Over 273–282 (RVVNVHSSWH) the chain is Extracellular. The helical transmembrane segment at 283–303 (WAWEVITYMGILLHSTILTLS) threads the bilayer. Residues 304-329 (NPKMRKALKIKFPDLCVARSQDKRRG) lie on the Cytoplasmic side of the membrane.

The protein belongs to the G-protein coupled receptor T2R family. Expressed in tongue and gastrointestinal tract.

It localises to the membrane. Functionally, putative taste receptor which may play a role in the perception of bitterness. The sequence is that of Taste receptor type 2 member 134 from Rattus norvegicus (Rat).